The chain runs to 1010 residues: Protein translocase subunit SecA (1010 aa).

ATP-binding positions include Q86, 104 to 108, and D535; that span reads GEGKT. The span at 893–904 shows a compositional bias: low complexity; the sequence is QAGAADGNAKGA. Residues 893 to 916 are disordered; the sequence is QAGAADGNAKGARTVRHSVRLPGR. C920, C922, C931, and H932 together coordinate Zn(2+). Residues 950–981 show a composition bias toward low complexity; it reads QHAAVAADTPAQPAPQATATRPPTSQVPRGRA. The interval 950–1010 is disordered; it reads QHAAVAADTP…RGKGASARKK (61 aa).

This sequence belongs to the SecA family. Monomer and homodimer. Part of the essential Sec protein translocation apparatus which comprises SecA, SecYEG and auxiliary proteins SecDF. Other proteins may also be involved. Zn(2+) is required as a cofactor.

It is found in the cell membrane. It localises to the cytoplasm. The catalysed reaction is ATP + H2O + cellular proteinSide 1 = ADP + phosphate + cellular proteinSide 2.. In terms of biological role, part of the Sec protein translocase complex. Interacts with the SecYEG preprotein conducting channel. Has a central role in coupling the hydrolysis of ATP to the transfer of proteins into and across the cell membrane, serving as an ATP-driven molecular motor driving the stepwise translocation of polypeptide chains across the membrane. The polypeptide is Protein translocase subunit SecA (Roseiflexus sp. (strain RS-1)).